A 134-amino-acid chain; its full sequence is ATP synthase epsilon chain (134 aa).

The protein belongs to the ATPase epsilon chain family. F-type ATPases have 2 components, CF(1) - the catalytic core - and CF(0) - the membrane proton channel. CF(1) has five subunits: alpha(3), beta(3), gamma(1), delta(1), epsilon(1). CF(0) has three main subunits: a, b and c.

Its subcellular location is the cell membrane. Functionally, produces ATP from ADP in the presence of a proton gradient across the membrane. The polypeptide is ATP synthase epsilon chain (Anoxybacillus flavithermus (strain DSM 21510 / WK1)).